Consider the following 286-residue polypeptide: Polyamine aminopropyltransferase (286 aa).

Positions Thr-5–Asp-238 constitute a PABS domain. Residue Gln-33 coordinates S-methyl-5'-thioadenosine. Positions 64 and 88 each coordinate spermidine. S-methyl-5'-thioadenosine is bound by residues Glu-108 and Asp-140 to Gly-141. Asp-158 (proton acceptor) is an active-site residue. Residue Asp-158–Asp-161 participates in spermidine binding. Pro-165 contacts S-methyl-5'-thioadenosine.

It belongs to the spermidine/spermine synthase family. As to quaternary structure, homodimer or homotetramer.

Its subcellular location is the cytoplasm. It catalyses the reaction S-adenosyl 3-(methylsulfanyl)propylamine + putrescine = S-methyl-5'-thioadenosine + spermidine + H(+). Its pathway is amine and polyamine biosynthesis; spermidine biosynthesis; spermidine from putrescine: step 1/1. Functionally, catalyzes the irreversible transfer of a propylamine group from the amino donor S-adenosylmethioninamine (decarboxy-AdoMet) to putrescine (1,4-diaminobutane) to yield spermidine. The sequence is that of Polyamine aminopropyltransferase from Salmonella newport (strain SL254).